The primary structure comprises 326 residues: tRNA-modifying protein YgfZ (326 aa).

Trp27 and Trp189 together coordinate folate.

Belongs to the tRNA-modifying YgfZ family.

It localises to the cytoplasm. Functionally, folate-binding protein involved in regulating the level of ATP-DnaA and in the modification of some tRNAs. It is probably a key factor in regulatory networks that act via tRNA modification, such as initiation of chromosomal replication. The sequence is that of tRNA-modifying protein YgfZ from Salmonella typhimurium (strain LT2 / SGSC1412 / ATCC 700720).